The chain runs to 131 residues: Translation initiation factor 5A (131 aa).

Lys37 bears the Hypusine mark.

Belongs to the eIF-5A family.

It localises to the cytoplasm. Its function is as follows. Functions by promoting the formation of the first peptide bond. The polypeptide is Translation initiation factor 5A (eIF5A) (Methanococcus aeolicus (strain ATCC BAA-1280 / DSM 17508 / OCM 812 / Nankai-3)).